The sequence spans 330 residues: Phospholipase C (330 aa).

The signal sequence occupies residues 1–34 (MVKKTKSNSLKKVATLALANLLLVGALTDNSAKA). Cysteine 155 and cysteine 191 are oxidised to a cystine.

It belongs to the neutral sphingomyelinase family. As to quaternary structure, monomer.

It is found in the secreted. The catalysed reaction is a 1,2-diacyl-sn-glycero-3-phosphocholine + H2O = phosphocholine + a 1,2-diacyl-sn-glycerol + H(+). Its function is as follows. Bacterial hemolysins are exotoxins that attack blood cell membranes and cause cell rupture. Beta-hemolysin is a phospholipase C with specific activity toward sphingomyelins. Has a high specificity for sphingomyelin, hydrolyzes lysophosphatidylcholine at a much lower rate, but has no activity towards phosphatidylcholine, phosphatidylethanolamine, or phosphatidylserine. In Staphylococcus aureus (strain NCTC 8325 / PS 47), this protein is Phospholipase C (hlb).